The sequence spans 192 residues: Transmembrane protein 276 (192 aa).

Residues Met1 to Ala32 form the signal peptide. A run of 4 helical transmembrane segments spans residues Gly35–Leu55, Ala63–Val83, Ser89–Pro109, and Val114–Thr134.

It is found in the membrane. The polypeptide is Transmembrane protein 276 (Homo sapiens (Human)).